Consider the following 462-residue polypeptide: ATP synthase subunit beta (462 aa).

150-157 lines the ATP pocket; it reads GGAGVGKT.

This sequence belongs to the ATPase alpha/beta chains family. As to quaternary structure, F-type ATPases have 2 components, CF(1) - the catalytic core - and CF(0) - the membrane proton channel. CF(1) has five subunits: alpha(3), beta(3), gamma(1), delta(1), epsilon(1). CF(0) has three main subunits: a(1), b(2) and c(9-12). The alpha and beta chains form an alternating ring which encloses part of the gamma chain. CF(1) is attached to CF(0) by a central stalk formed by the gamma and epsilon chains, while a peripheral stalk is formed by the delta and b chains.

The protein localises to the cell membrane. The enzyme catalyses ATP + H2O + 4 H(+)(in) = ADP + phosphate + 5 H(+)(out). Its function is as follows. Produces ATP from ADP in the presence of a proton gradient across the membrane. The catalytic sites are hosted primarily by the beta subunits. This Wigglesworthia glossinidia brevipalpis protein is ATP synthase subunit beta.